A 228-amino-acid polypeptide reads, in one-letter code: UPF0758 protein RALTA_A2508 (228 aa).

Residues 102–224 (GFDSPDSVRS…IRSLAESCER (123 aa)) form the MPN domain. Zn(2+) contacts are provided by His-173, His-175, and Asp-186. The short motif at 173 to 186 (HNHPRGTTAPSQSD) is the JAMM motif element.

Belongs to the UPF0758 family.

In Cupriavidus taiwanensis (strain DSM 17343 / BCRC 17206 / CCUG 44338 / CIP 107171 / LMG 19424 / R1) (Ralstonia taiwanensis (strain LMG 19424)), this protein is UPF0758 protein RALTA_A2508.